The primary structure comprises 131 residues: Sec-independent protein translocase protein TatB (131 aa).

A helical transmembrane segment spans residues 2-22; it reads FDGIGFMELLLIGIVGLVVLG. Positions 86 to 95 are enriched in polar residues; sequence LKEAAQSVNR. The tract at residues 86–131 is disordered; sequence LKEAAQSVNRPYQVEDVPAAKDVPAKEMPTSETSTATNANSDKPNG. The span at 115 to 131 shows a compositional bias: low complexity; sequence TSETSTATNANSDKPNG.

Belongs to the TatB family. The Tat system comprises two distinct complexes: a TatABC complex, containing multiple copies of TatA, TatB and TatC subunits, and a separate TatA complex, containing only TatA subunits. Substrates initially bind to the TatABC complex, which probably triggers association of the separate TatA complex to form the active translocon.

Its subcellular location is the cell inner membrane. In terms of biological role, part of the twin-arginine translocation (Tat) system that transports large folded proteins containing a characteristic twin-arginine motif in their signal peptide across membranes. Together with TatC, TatB is part of a receptor directly interacting with Tat signal peptides. TatB may form an oligomeric binding site that transiently accommodates folded Tat precursor proteins before their translocation. This chain is Sec-independent protein translocase protein TatB, found in Shewanella halifaxensis (strain HAW-EB4).